Here is a 149-residue protein sequence, read N- to C-terminus: Transcriptional repressor NrdR (149 aa).

Residues 3–34 fold into a zinc finger; the sequence is CPFCSAVDTKVIDSRLVGEGSSVRRRRQCLVC. The region spanning 49–139 is the ATP-cone domain; the sequence is PRVVKSNDVR…VYRSFEDIKE (91 aa).

This sequence belongs to the NrdR family. Requires Zn(2+) as cofactor.

Functionally, negatively regulates transcription of bacterial ribonucleotide reductase nrd genes and operons by binding to NrdR-boxes. The protein is Transcriptional repressor NrdR of Enterobacter sp. (strain 638).